Consider the following 614-residue polypeptide: Acid phosphatase (614 aa).

The N-terminal stretch at 1 to 22 (MKGTAASALLVALSATAAQARP) is a signal peptide. In terms of domain architecture, Fibronectin type-III spans 80–176 (IPKGMHIHYQ…EVLSFKTSRP (97 aa)). N-linked (GlcNAc...) asparagine glycans are attached at residues Asn-110, Asn-161, Asn-242, Asn-295, Asn-333, Asn-340, Asn-352, Asn-408, Asn-429, Asn-512, Asn-523, Asn-559, and Asn-578. Residues 606–614 (VAGGKKLHS) constitute a propeptide that is removed on maturation.

In terms of assembly, monomer. It depends on Cu cation as a cofactor. In terms of processing, glycosylated; probably with N-linked high-mannose oligosaccharides.

Its subcellular location is the secreted. It catalyses the reaction a phosphate monoester + H2O = an alcohol + phosphate. Competitively inhibited by phosphomycin and inorganic orthophosphate. The protein is Acid phosphatase (aphA) of Aspergillus ficuum.